Reading from the N-terminus, the 748-residue chain is MTTEAKCPFNHAVVGTGTTNRDWWPKQLRVDLLSQHSSKSNPLGQSFNYADAFKRLDLQALKRDLHALMTDSQDWWPADFGHYGPLFVRMAWHSAGTYRIGDGRGGGGRGQQRFAPLNSWPDNVSLDKARRLLWPIKQKYGQAISWADLMILTGNVALESMGLKTFGFAGGREDTWEPDQDLYWGRETKWLGGDDRYSRGSPGVDEAHGVLVKDDDSQVPHTRDLENPLAAVQMGLIYVNPEGPDGNPDPIASARDIRDTFARMAMNDEETVALIAGGHTFGKTHGAGPADNVGAEPEAGELESQGLGWHNRYGSGKGADTITSGLEVTWTTTPAQWSNDYFDHLFGFEWELSKSPAGAHQWVAKNADAIIPDAHDASRKHRPTMLTTDLALRFDPAYEAISRRFQQHPEQFADAFARAWFKLTHRDMGPRSRYLGADVPAEELVWQDPVPAVDHPLVDAQDAAALKQTILASGLSVAHLVSTAWASATTFRGSDKRGGANGARIRLAPQKDWQANQPEQLAKVLATLERIQADFNAAQSGGKKISLADLIVLAGNAAVEHAAQAAGHQVTVPFAPGRTDASQQQTDVESFAVLEPVADGFRNFAKRRYAVPAEALLIDKAQLLTLTAPELTVLVGGLRVLGANVGDSKHGVFTSRPGVLSNDFFANLLDMRTEWKATSEAKDEYEGRDRSTGELRWTGTRVDLVFGSNSILRAVAEVYASADAQEKFVHDFVAAWTKVMQLDRFDLA.

A cross-link (tryptophyl-tyrosyl-methioninium (Trp-Tyr) (with M-264)) is located at residues 92–238 (WHSAGTYRIG…LAAVQMGLIY (147 aa)). His-93 (proton acceptor) is an active-site residue. Positions 238 to 264 (YVNPEGPDGNPDPIASARDIRDTFARM) form a cross-link, tryptophyl-tyrosyl-methioninium (Tyr-Met) (with W-92). His-279 is a heme b binding site.

It belongs to the peroxidase family. Peroxidase/catalase subfamily. As to quaternary structure, homodimer or homotetramer. Requires heme b as cofactor. In terms of processing, formation of the three residue Trp-Tyr-Met cross-link is important for the catalase, but not the peroxidase activity of the enzyme.

The enzyme catalyses H2O2 + AH2 = A + 2 H2O. The catalysed reaction is 2 H2O2 = O2 + 2 H2O. Its function is as follows. Bifunctional enzyme with both catalase and broad-spectrum peroxidase activity. This chain is Catalase-peroxidase, found in Xanthomonas euvesicatoria pv. vesicatoria (strain 85-10) (Xanthomonas campestris pv. vesicatoria).